The primary structure comprises 209 residues: Ribosomal RNA large subunit methyltransferase E (209 aa).

S-adenosyl-L-methionine contacts are provided by Gly63, Trp65, Asp83, Asp99, and Asp124. The Proton acceptor role is filled by Lys164.

This sequence belongs to the class I-like SAM-binding methyltransferase superfamily. RNA methyltransferase RlmE family.

The protein localises to the cytoplasm. It catalyses the reaction uridine(2552) in 23S rRNA + S-adenosyl-L-methionine = 2'-O-methyluridine(2552) in 23S rRNA + S-adenosyl-L-homocysteine + H(+). Functionally, specifically methylates the uridine in position 2552 of 23S rRNA at the 2'-O position of the ribose in the fully assembled 50S ribosomal subunit. In Tolumonas auensis (strain DSM 9187 / NBRC 110442 / TA 4), this protein is Ribosomal RNA large subunit methyltransferase E.